We begin with the raw amino-acid sequence, 244 residues long: MMRTPGLLGLRGFVAFAAKLWSFVLYLLRRQVRTIIQYQTVRYDVLPLSPASRNRLSQVKRKVLVLDLDETLIHSHHDGVLRPTVRPGTPPDFILKVVIDKHPVRFFVHKRPHVDFFLEVVSQWYELVVFTASMEIYGSAVADKLDNNRGVLRRRFYRQHCTLELGSYIKDLSVVHSDLSSVVILDNSPGAYRSHPDNAIPIKSWFSDPSDTALLNLLPMLDALRFTADVRSVLSRNLHQHRLW.

The chain crosses the membrane as a helical span at residues Leu-7–Arg-29. The 168-residue stretch at Ser-57 to Leu-224 folds into the FCP1 homology domain.

This sequence belongs to the dullard family. Interacts with bmpr1a, bmpr1b and bmpr2.

Its subcellular location is the membrane. It localises to the cytoplasm. The protein resides in the perinuclear region. It catalyses the reaction O-phospho-L-seryl-[protein] + H2O = L-seryl-[protein] + phosphate. It carries out the reaction O-phospho-L-threonyl-[protein] + H2O = L-threonyl-[protein] + phosphate. In terms of biological role, serine/threonine protein phosphatase that may dephosphorylate and activate lipins. Lipins are phosphatidate phosphatases that catalyze the conversion of phosphatidic acid to diacylglycerol and control the metabolism of fatty acids at different levels. May indirectly modulate the lipid composition of nuclear and/or endoplasmic reticulum membranes and be required for proper nuclear membrane morphology and/or dynamics. May also indirectly regulate the production of lipid droplets and triacylglycerol. Induces neuronal differentiation by antagonizing BMP signaling. Acts both by dephosphorylating BMPR1A and by promoting BMPR2 proteasomal degradation. The sequence is that of CTD nuclear envelope phosphatase 1 (ctdnep1) from Xenopus tropicalis (Western clawed frog).